Here is a 423-residue protein sequence, read N- to C-terminus: UDP-N-acetylglucosamine 1-carboxyvinyltransferase (423 aa).

22–23 (KN) is a binding site for phosphoenolpyruvate. Position 98 (arginine 98) interacts with UDP-N-acetyl-alpha-D-glucosamine. The Proton donor role is filled by cysteine 122. The residue at position 122 (cysteine 122) is a 2-(S-cysteinyl)pyruvic acid O-phosphothioketal. Residues 127-131 (RPVDQ), aspartate 311, and isoleucine 333 each bind UDP-N-acetyl-alpha-D-glucosamine.

It belongs to the EPSP synthase family. MurA subfamily.

It localises to the cytoplasm. It catalyses the reaction phosphoenolpyruvate + UDP-N-acetyl-alpha-D-glucosamine = UDP-N-acetyl-3-O-(1-carboxyvinyl)-alpha-D-glucosamine + phosphate. It functions in the pathway cell wall biogenesis; peptidoglycan biosynthesis. Functionally, cell wall formation. Adds enolpyruvyl to UDP-N-acetylglucosamine. This chain is UDP-N-acetylglucosamine 1-carboxyvinyltransferase, found in Stenotrophomonas maltophilia (strain R551-3).